The primary structure comprises 664 residues: Lysophospholipase 1 (664 aa).

Positions 1–22 (MKLQSLLVSAAVLTSLTENVNA) are cleaved as a signal peptide. Residues N26, N33, N52, N78, N92, N123, N160, N170, N215, N277, N307, N345, N388, N459, N489, N513, N541, N565, and N582 are each glycosylated (N-linked (GlcNAc...) asparagine). The 552-residue stretch at 35–586 (TCDDDINLVR…TNYCWNGTID (552 aa)) folds into the PLA2c domain. N634 carries GPI-anchor amidated asparagine lipidation. A propeptide spans 635–664 (AGNALVNYSNLNTNTFIGVLSVISAVFGLI) (removed in mature form).

It belongs to the lysophospholipase family.

The protein localises to the cell membrane. The catalysed reaction is a 1-acyl-sn-glycero-3-phosphocholine + H2O = sn-glycerol 3-phosphocholine + a fatty acid + H(+). It carries out the reaction a 1-acyl-sn-glycero-3-phospho-(1D-myo-inositol) + H2O = sn-glycero-3-phospho-1D-myo-inositol + a fatty acid + H(+). The enzyme catalyses a 1-acyl-sn-glycero-3-phospho-L-serine + H2O = sn-glycero-3-phospho-L-serine + a fatty acid + H(+). It catalyses the reaction a 1,2-diacyl-sn-glycero-3-phospho-(1D-myo-inositol) + 2 H2O = sn-glycero-3-phospho-1D-myo-inositol + 2 a carboxylate + 2 H(+). The catalysed reaction is a 1,2-diacyl-sn-glycero-3-phospho-L-serine + 2 H2O = sn-glycero-3-phospho-L-serine + 2 a carboxylate + 2 H(+). It carries out the reaction 2 1-hexadecanoyl-sn-glycero-3-phosphocholine = 1,2-dihexadecanoyl-sn-glycero-3-phosphocholine + sn-glycerol 3-phosphocholine. The enzyme catalyses 1-hexadecanoyl-sn-glycero-3-phosphocholine + H2O = sn-glycerol 3-phosphocholine + hexadecanoate + H(+). It catalyses the reaction 1,2-dihexadecanoyl-sn-glycero-3-phosphocholine + H2O = 1-hexadecanoyl-sn-glycero-3-phosphocholine + hexadecanoate + H(+). Sequentially removes both fatty acyl groups from diacylglycerophospholipids and therefore has both phospholipase B and lysophospholipase activities. It also displays transacylase activity. Substrate preference is phosphatidylserine &gt; phosphatidylinositol &gt;&gt; phosphatidylcholine &gt; phosphatidylethanolamine. The substrate specificity is pH- and ion-dependent. In contrast with activities observed at optimum pH 3.5, the order of substrate preference at pH 5.5 is phosphatidylcholine = phosphatidylethanolamine &gt;&gt; phosphatidylinositol. Degrades predominantly phosphatidylcholine and to some extent phosphatidylinositol in vivo. The polypeptide is Lysophospholipase 1 (Saccharomyces cerevisiae (strain ATCC 204508 / S288c) (Baker's yeast)).